Here is a 389-residue protein sequence, read N- to C-terminus: Dihydroorotase (389 aa).

His-51 and His-53 together coordinate Zn(2+). Substrate-binding positions include 53-55 (HVR) and Asn-85. The Zn(2+) site is built by Lys-133, His-158, His-192, and Asp-254. Position 133 is an N6-carboxylysine (Lys-133). Asp-254 is an active-site residue. Residues His-258 and 272–273 (PG) contribute to the substrate site.

This sequence belongs to the metallo-dependent hydrolases superfamily. DHOase family. Class I DHOase subfamily. Zn(2+) serves as cofactor.

It carries out the reaction (S)-dihydroorotate + H2O = N-carbamoyl-L-aspartate + H(+). It participates in pyrimidine metabolism; UMP biosynthesis via de novo pathway; (S)-dihydroorotate from bicarbonate: step 3/3. In terms of biological role, catalyzes the reversible cyclization of carbamoyl aspartate to dihydroorotate. The sequence is that of Dihydroorotase from Sulfurisphaera tokodaii (strain DSM 16993 / JCM 10545 / NBRC 100140 / 7) (Sulfolobus tokodaii).